Reading from the N-terminus, the 340-residue chain is GTPase Obg (340 aa).

Residues 1–158 (MSFIDEAKVY…KYITLKLKII (158 aa)) form the Obg domain. One can recognise an OBG-type G domain in the interval 159-325 (SDIGIIGLPN…LSTLIQYIHK (167 aa)). GTP is bound by residues 165–172 (GLPNAGKS), 190–194 (FTTLE), 211–214 (DIPG), 278–281 (NKSD), and 306–308 (SSI). Positions 172 and 192 each coordinate Mg(2+).

The protein belongs to the TRAFAC class OBG-HflX-like GTPase superfamily. OBG GTPase family. In terms of assembly, monomer. The cofactor is Mg(2+).

Its subcellular location is the cytoplasm. An essential GTPase which binds GTP, GDP and possibly (p)ppGpp with moderate affinity, with high nucleotide exchange rates and a fairly low GTP hydrolysis rate. Plays a role in control of the cell cycle, stress response, ribosome biogenesis and in those bacteria that undergo differentiation, in morphogenesis control. This is GTPase Obg from Ehrlichia chaffeensis (strain ATCC CRL-10679 / Arkansas).